Here is a 212-residue protein sequence, read N- to C-terminus: Ribonuclease HII (212 aa).

The RNase H type-2 domain occupies 17-211 (RVLAGIDEAG…VLELLDLTDS (195 aa)). Residues Asp-23, Glu-24, and Asp-120 each contribute to the a divalent metal cation site.

It belongs to the RNase HII family. It depends on Mn(2+) as a cofactor. The cofactor is Mg(2+).

It localises to the cytoplasm. The enzyme catalyses Endonucleolytic cleavage to 5'-phosphomonoester.. Functionally, endonuclease that specifically degrades the RNA of RNA-DNA hybrids. In Chloroflexus aggregans (strain MD-66 / DSM 9485), this protein is Ribonuclease HII.